Reading from the N-terminus, the 849-residue chain is Neprilysin-1 (849 aa).

Topologically, residues 1 to 113 (MSQQHEATAA…LKESQQRRRL (113 aa)) are cytoplasmic. Residues 41–61 (QQQVQHQAPHQMQQQQQQQQQ) are compositionally biased toward low complexity. Residues 41 to 63 (QQQVQHQAPHQMQQQQQQQQQNK) are disordered. A helical; Signal-anchor for type II membrane protein transmembrane segment spans residues 114–134 (LVLAIAFTVLGAAIGALAIYF). At 135–849 (ASVHQRCHLY…MNPAEKCSVW (715 aa)) the chain is on the extracellular side. Over residues 146 to 155 (LEPDNDDRPN) the composition is skewed to basic and acidic residues. Residues 146-167 (LEPDNDDRPNGRWNQDSGSAHE) form a disordered region. Positions 172 to 849 (ICMTQECVRT…MNPAEKCSVW (678 aa)) constitute a Peptidase M13 domain. 5 disulfides stabilise this stretch: Cys173-Cys178, Cys196-Cys834, Cys204-Cys794, Cys260-Cys512, and Cys721-Cys846. Asn309, Asn326, Asn393, Asn589, and Asn599 each carry an N-linked (GlcNAc...) asparagine glycan. Position 684 (His684) interacts with Zn(2+). The active site involves Glu685. His688 contacts Zn(2+). N-linked (GlcNAc...) asparagine glycosylation occurs at Asn709. Zn(2+) is bound at residue Glu746. Residue Asp750 is the Proton donor of the active site. N-linked (GlcNAc...) asparagine glycosylation is present at Asn778.

This sequence belongs to the peptidase M13 family. Zn(2+) serves as cofactor. As to expression, expressed in the testicular tube, near and in the seminal vesicles. In adults and third-instar larvae, expressed in the midgut and in the mushroom bodies of the brain and neurons in the pars intercerebralis. Also expressed in neurons of the ventral ganglion and imaginal disks (wing and leg) of third-instar larvae. In stage 17 embryos, expressed in the peripheral nervous system, pharynx and midgut.

The protein localises to the cell membrane. It carries out the reaction Preferential cleavage of polypeptides between hydrophobic residues, particularly with Phe or Tyr at P1'.. In terms of biological role, metalloendoprotease which functions in fertility and memory formation. Required in the dorsal paired medial neurons and alpha/beta mushroom body neurons for the proper formation of long-term and middle-term memories. Required in males to maximise egg-laying in female mates and is also required in females for their fertility. This Drosophila melanogaster (Fruit fly) protein is Neprilysin-1.